Reading from the N-terminus, the 242-residue chain is Proteasome subunit alpha (242 aa).

The protein belongs to the peptidase T1A family. As to quaternary structure, the 20S proteasome core is composed of 14 alpha and 14 beta subunits that assemble into four stacked heptameric rings, resulting in a barrel-shaped structure. The two inner rings, each composed of seven catalytic beta subunits, are sandwiched by two outer rings, each composed of seven alpha subunits. The catalytic chamber with the active sites is on the inside of the barrel. Has a gated structure, the ends of the cylinder being occluded by the N-termini of the alpha-subunits. Is capped at one or both ends by the proteasome regulatory ATPase, PAN.

It is found in the cytoplasm. Its activity is regulated as follows. The formation of the proteasomal ATPase PAN-20S proteasome complex, via the docking of the C-termini of PAN into the intersubunit pockets in the alpha-rings, triggers opening of the gate for substrate entry. Interconversion between the open-gate and close-gate conformations leads to a dynamic regulation of the 20S proteasome proteolysis activity. In terms of biological role, component of the proteasome core, a large protease complex with broad specificity involved in protein degradation. The sequence is that of Proteasome subunit alpha from Sulfolobus acidocaldarius (strain ATCC 33909 / DSM 639 / JCM 8929 / NBRC 15157 / NCIMB 11770).